The following is a 587-amino-acid chain: Polyadenylate-binding protein-interacting protein 3 (587 aa).

The region spanning 51–132 (LLVYFTTCNI…LVQVIAKDLP (82 aa)) is the Sm domain. The interval 422–503 (AKSENSSGWP…QSPQSPVFDG (82 aa)) is disordered. A compositionally biased stretch (low complexity) spans 431–464 (PGSSISRNSENSAASSASNLPILSPSSSGSLSSE). Residues 467 to 475 (TLNPNAKEF) carry the PAM2-like 1; degenerate motif. The PAM2-like 2 motif lies at 476-486 (KLNPNAKSFKP). Residues 486–498 (PSPSATRPQSPQS) are compositionally biased toward polar residues.

This Arabidopsis thaliana (Mouse-ear cress) protein is Polyadenylate-binding protein-interacting protein 3 (CID3).